The primary structure comprises 131 residues: Small ribosomal subunit protein bS6 (131 aa).

Residues 98–131 (EASPMVKAKDERRERRDDFANETADDAEAGDSEE) are disordered. Positions 104–116 (KAKDERRERRDDF) are enriched in basic and acidic residues. Over residues 120-131 (TADDAEAGDSEE) the composition is skewed to acidic residues.

Belongs to the bacterial ribosomal protein bS6 family.

Functionally, binds together with bS18 to 16S ribosomal RNA. This chain is Small ribosomal subunit protein bS6, found in Salmonella dublin (strain CT_02021853).